A 257-amino-acid polypeptide reads, in one-letter code: Triosephosphate isomerase (257 aa).

9–11 is a substrate binding site; that stretch reads NWK. His95 serves as the catalytic Electrophile. Catalysis depends on Glu168, which acts as the Proton acceptor. Residues Gly174, Ser213, and 234–235 contribute to the substrate site; that span reads GG.

This sequence belongs to the triosephosphate isomerase family. Homodimer.

It is found in the cytoplasm. The enzyme catalyses D-glyceraldehyde 3-phosphate = dihydroxyacetone phosphate. The protein operates within carbohydrate biosynthesis; gluconeogenesis. It functions in the pathway carbohydrate degradation; glycolysis; D-glyceraldehyde 3-phosphate from glycerone phosphate: step 1/1. Involved in the gluconeogenesis. Catalyzes stereospecifically the conversion of dihydroxyacetone phosphate (DHAP) to D-glyceraldehyde-3-phosphate (G3P). The polypeptide is Triosephosphate isomerase (Acidithiobacillus ferrooxidans (strain ATCC 23270 / DSM 14882 / CIP 104768 / NCIMB 8455) (Ferrobacillus ferrooxidans (strain ATCC 23270))).